A 105-amino-acid polypeptide reads, in one-letter code: Large ribosomal subunit protein uL24 (105 aa).

The protein belongs to the universal ribosomal protein uL24 family. As to quaternary structure, part of the 50S ribosomal subunit.

In terms of biological role, one of two assembly initiator proteins, it binds directly to the 5'-end of the 23S rRNA, where it nucleates assembly of the 50S subunit. One of the proteins that surrounds the polypeptide exit tunnel on the outside of the subunit. In Nitrosococcus oceani (strain ATCC 19707 / BCRC 17464 / JCM 30415 / NCIMB 11848 / C-107), this protein is Large ribosomal subunit protein uL24.